We begin with the raw amino-acid sequence, 642 residues long: Threonine--tRNA ligase (642 aa).

A TGS domain is found at 1–61; sequence MPVITLPDGS…SEDANLVIFT (61 aa). The interval 243-534 is catalytic; the sequence is DHRKLAKKFD…LIEHYEGSFP (292 aa). Positions 334, 385, and 511 each coordinate Zn(2+).

This sequence belongs to the class-II aminoacyl-tRNA synthetase family. As to quaternary structure, homodimer. Requires Zn(2+) as cofactor.

It is found in the cytoplasm. It carries out the reaction tRNA(Thr) + L-threonine + ATP = L-threonyl-tRNA(Thr) + AMP + diphosphate + H(+). In terms of biological role, catalyzes the attachment of threonine to tRNA(Thr) in a two-step reaction: L-threonine is first activated by ATP to form Thr-AMP and then transferred to the acceptor end of tRNA(Thr). Also edits incorrectly charged L-seryl-tRNA(Thr). This Cellvibrio japonicus (strain Ueda107) (Pseudomonas fluorescens subsp. cellulosa) protein is Threonine--tRNA ligase.